Reading from the N-terminus, the 460-residue chain is Probable argininosuccinate lyase (460 aa).

3 residues coordinate 2-(N(omega)-L-arginino)succinate: Ser-26, Asn-114, and Thr-159. The active-site Proton acceptor is the His-160. Catalysis depends on Ser-281, which acts as the Proton donor. Residues Asn-289, Tyr-321, Gln-326, and Lys-329 each contribute to the 2-(N(omega)-L-arginino)succinate site.

Belongs to the lyase 1 family. Argininosuccinate lyase subfamily. In terms of assembly, homotetramer.

It carries out the reaction 2-(N(omega)-L-arginino)succinate = fumarate + L-arginine. Its pathway is amino-acid biosynthesis; L-arginine biosynthesis; L-arginine from L-ornithine and carbamoyl phosphate: step 3/3. The chain is Probable argininosuccinate lyase (argx) from Schizosaccharomyces pombe (strain 972 / ATCC 24843) (Fission yeast).